The sequence spans 178 residues: Cytidylate kinase (178 aa).

G7–S15 contacts ATP.

Belongs to the cytidylate kinase family. Type 2 subfamily.

The protein localises to the cytoplasm. It carries out the reaction CMP + ATP = CDP + ADP. The catalysed reaction is dCMP + ATP = dCDP + ADP. The sequence is that of Cytidylate kinase from Methanospirillum hungatei JF-1 (strain ATCC 27890 / DSM 864 / NBRC 100397 / JF-1).